We begin with the raw amino-acid sequence, 105 residues long: Dicamba O-demethylase, ferredoxin component (105 aa).

Residues 2–105 form the 2Fe-2S ferredoxin-type domain; it reads PQITVVNQSG…GIKVTIAQED (104 aa). [2Fe-2S] cluster contacts are provided by Cys-40, Cys-46, Cys-49, and Cys-86.

This sequence belongs to the adrenodoxin/putidaredoxin family. In terms of assembly, monomer. The dicamba O-demethylase multicomponent enzyme system is composed of an oxygenase component (DdmC) and an electron transfer component formed by a ferredoxin reductase (DdmA1) and a ferredoxin (DdmB). In vitro, dicamba O-demethylase assays in which DdmA2 is substituted for DdmA1 demonstrate that the two enzymes possess nearly identical activities. [2Fe-2S] cluster serves as cofactor.

Component of the dicamba O-demethylase multicomponent enzyme system involved in the degradation of the herbicide dicamba. In vitro, functions as an intermediate electron transfer protein. The chain is Dicamba O-demethylase, ferredoxin component from Stenotrophomonas maltophilia (Pseudomonas maltophilia).